The primary structure comprises 74 residues: Exodeoxyribonuclease 7 small subunit (74 aa).

It belongs to the XseB family. Heterooligomer composed of large and small subunits.

It is found in the cytoplasm. The enzyme catalyses Exonucleolytic cleavage in either 5'- to 3'- or 3'- to 5'-direction to yield nucleoside 5'-phosphates.. Bidirectionally degrades single-stranded DNA into large acid-insoluble oligonucleotides, which are then degraded further into small acid-soluble oligonucleotides. The chain is Exodeoxyribonuclease 7 small subunit from Leuconostoc citreum (strain KM20).